We begin with the raw amino-acid sequence, 903 residues long: Dynamin-like GTPase msp1, mitochondrial (903 aa).

A mitochondrion-targeting transit peptide spans 1–78; sequence MGISWFLSRF…RFFSFSSISR (78 aa). A helical membrane pass occupies residues 86 to 103; sequence LPVAGFSLVAGGAAYIGA. The segment covering 167-188 has biased composition (basic and acidic residues); it reads VLQAERAKEHRSNSNDKQKSSD. Residues 167-198 form a disordered region; that stretch reads VLQAERAKEHRSNSNDKQKSSDNDEDPNDTTV. Residues 198–214 form a helical membrane-spanning segment; it reads VGIGAALAASILSVDSV. Positions 260 to 531 constitute a Dynamin-type G domain; the sequence is AVTLPSIVVI…LEYTMSKNLQ (272 aa). The G1 motif stretch occupies residues 270-277; it reads GSQSSGKS. GTP contacts are provided by serine 273, serine 274, glycine 275, lysine 276, serine 277, serine 278, and glycine 292. Serine 277 provides a ligand contact to Mg(2+). A G2 motif region spans residues 296-298; that stretch reads VTR. Mg(2+) contacts are provided by threonine 297 and aspartate 370. Residues 370-373 are G3 motif; the sequence is DLPG. Residues 438–441 form a G4 motif region; it reads TKMD. Positions 439, 441, and 468 each coordinate GTP. Positions 467–470 are G5 motif; that stretch reads ISRI. Positions 691–805 are paddle region; sequence ATSEQVENCV…VLKSRACKHK (115 aa). Cysteine 802 and cysteine 811 are disulfide-bonded. One can recognise a GED domain in the interval 805 to 898; it reads KEAKYTCPEI…KINSLVILEQ (94 aa).

Belongs to the TRAFAC class dynamin-like GTPase superfamily. Dynamin/Fzo/YdjA family. In terms of assembly, homooligomer. Interacts with cdr1. Post-translationally, cleavage of the transit peptide by mitochondrial processing protease (MPP) produces a long integral membrane form of msp1 (l-msp1). Further processing by a rhomboid protease after the transmembrane regions produces a short peripheral membrane form of msp1 (s-msp1). Both isoforms are required for full activity.

The protein localises to the mitochondrion inner membrane. The protein resides in the mitochondrion intermembrane space. The enzyme catalyses GTP + H2O = GDP + phosphate + H(+). Dynamin-related GTPase that is essential for normal mitochondrial morphology by mediating fusion of the mitochondrial inner membranes and maintaining respiratory chain function. Exists in two forms: the transmembrane, long form (Dynamin-like GTPase msp1, long form; l-msp1), which is tethered to the inner mitochondrial membrane, and the short soluble form (Dynamin-like GTPase msp1, short form; s-msp1), which results from proteolytic cleavage and localizes in the intermembrane space. Both forms (l-msp1 and s-msp1) cooperate to catalyze the fusion of the mitochondrial inner membrane. Its role in mitochondrial morphology is required for mitochondrial genome maintenance. In terms of biological role, constitutes the transmembrane long form (l-msp1) that plays a central role in mitochondrial inner membrane fusion. L-msp1 and the soluble short form (s-msp1) form higher-order helical assemblies that coordinate the fusion of mitochondrial inner membranes. Inner membrane-anchored l-msp1 molecules initiate membrane remodeling by recruiting soluble s-msp1 to rapidly polymerize into a flexible cylindrical scaffold encaging the mitochondrial inner membrane. Once at the membrane surface, the formation of s-msp1 helices induce bilayer curvature. Msp1 dimerization through the paddle region, which inserts into cardiolipin-containing membrane, promotes GTP hydrolysis and the helical assembly of a flexible msp1 lattice on the membrane, which drives membrane curvature and mitochondrial fusion. Functionally, constitutes the soluble short form (s-msp1) generated by cleavage, which plays a central role in mitochondrial inner membrane fusion. The transmembrane long form (l-msp1) and the s-msp1 form higher-order helical assemblies that coordinate the fusion of mitochondrial inner membranes. Inner membrane-anchored l-msp1 molecules initiate membrane remodeling by recruiting soluble s-msp1 to rapidly polymerize into a flexible cylindrical scaffold encaging the mitochondrial inner membrane. Once at the membrane surface, the formation of s-msp1 helices induce bilayer curvature. Msp1 dimerization through the paddle region, which inserts into cardiolipin-containing membrane, promotes GTP hydrolysis and the helical assembly of a flexible msp1 lattice on the membrane, which drives membrane curvature and mitochondrial fusion. The sequence is that of Dynamin-like GTPase msp1, mitochondrial from Schizosaccharomyces pombe (strain 972 / ATCC 24843) (Fission yeast).